Here is a 295-residue protein sequence, read N- to C-terminus: MDRIALMDASGRDWSAWPAPAKLNLFLQITGRRADGYHLLQTVFRLLDWGDTVHLRVRRDGQIRRLGESLPGVSEDDDLVTRAARLLQSAAGTQAGAEIRVDKRIPAGGGFGGGSSDAATVLVALNALWGLGLAADVLAELGLQLGADVPVFVRGRNAWAEGVGEQLTPISLPEAAYLLVDPGVHVPTPALFRSQELTRDAALAKIADFASGSLLDNAFEPVLRRREPAVEAVFQALSRVGTPRLTGSGSGCFVEFATRAAAEQALAQLPGSLRAWVVEGAAHSPLLDALDATQV.

The active site involves Lys-22. 106 to 116 (PAGGGFGGGSS) contacts ATP. Residue Asp-148 is part of the active site.

This sequence belongs to the GHMP kinase family. IspE subfamily.

It carries out the reaction 4-CDP-2-C-methyl-D-erythritol + ATP = 4-CDP-2-C-methyl-D-erythritol 2-phosphate + ADP + H(+). It functions in the pathway isoprenoid biosynthesis; isopentenyl diphosphate biosynthesis via DXP pathway; isopentenyl diphosphate from 1-deoxy-D-xylulose 5-phosphate: step 3/6. Catalyzes the phosphorylation of the position 2 hydroxy group of 4-diphosphocytidyl-2C-methyl-D-erythritol. The sequence is that of 4-diphosphocytidyl-2-C-methyl-D-erythritol kinase from Xanthomonas euvesicatoria pv. vesicatoria (strain 85-10) (Xanthomonas campestris pv. vesicatoria).